A 1341-amino-acid polypeptide reads, in one-letter code: DNA-directed RNA polymerase subunit beta (1341 aa).

Belongs to the RNA polymerase beta chain family. As to quaternary structure, the RNAP catalytic core consists of 2 alpha, 1 beta, 1 beta' and 1 omega subunit. When a sigma factor is associated with the core the holoenzyme is formed, which can initiate transcription.

The catalysed reaction is RNA(n) + a ribonucleoside 5'-triphosphate = RNA(n+1) + diphosphate. In terms of biological role, DNA-dependent RNA polymerase catalyzes the transcription of DNA into RNA using the four ribonucleoside triphosphates as substrates. The sequence is that of DNA-directed RNA polymerase subunit beta from Blochmanniella pennsylvanica (strain BPEN).